The chain runs to 142 residues: Metallothiol transferase FosB (142 aa).

In terms of domain architecture, VOC spans 5 to 120 (SVNHICFSVS…DGHKIELHTG (116 aa)). The Mg(2+) site is built by histidine 8, histidine 67, and glutamate 116. The active-site Proton donor/acceptor is glutamate 116.

This sequence belongs to the fosfomycin resistance protein family. FosB subfamily. In terms of assembly, homodimer. Mg(2+) serves as cofactor.

The protein resides in the cytoplasm. Functionally, metallothiol transferase which confers resistance to fosfomycin by catalyzing the addition of a thiol cofactor to fosfomycin. L-cysteine is probably the physiological thiol donor. This Staphylococcus epidermidis (strain ATCC 12228 / FDA PCI 1200) protein is Metallothiol transferase FosB.